Reading from the N-terminus, the 184-residue chain is Cyclin-dependent kinase inhibitor 1 (184 aa).

Positions 85–98 are enriched in low complexity; that stretch reads ISSTTLTPLSSPST. A disordered region spans residues 85-184; it reads ISSTTLTPLS…IRTRSSCSPY (100 aa).

This sequence belongs to the CDI family. Interacts with cyd-1; the interaction is direct. In embryos, expression is first seen in pharyngeal primordium and later in all differentiating cells. Post embryonic expression corresponds to developmental patterns of cell cycle progression in many tissues including sex myoblasts, distal tip cells, vulval cells, seam cells, neurons, intestine cells and hypodermal cells.

The protein localises to the nucleus. Its function is as follows. Negative cell-cycle regulator that functions at the G1-to-S-phase transition. Required for suspension of the cell cycle in dauer larvae and starved L1 larvae. In vulval precursor cells (VPCs), a pathway of heterochronic genes acts via cki-1 to maintain VPCs in G1 during the L2 larval stage. Cul-2 may function in ubiquitin-mediated degradation by targeting cki-1 for degradation. Involved in distal tip cell development by repressing and modulating cye-1/cdk-2 activity levels in Z1.aa/Z4.pp and in Z1.ap/Z4.pa. This chain is Cyclin-dependent kinase inhibitor 1, found in Caenorhabditis elegans.